Here is a 756-residue protein sequence, read N- to C-terminus: Putative DNA ligase 052L (756 aa).

Lysine 103 serves as the catalytic N6-AMP-lysine intermediate. The span at proline 610 to arginine 620 shows a compositional bias: low complexity. Residues proline 610–aspartate 630 form a disordered region. The BRCT domain maps to lysine 648–arginine 742.

It belongs to the NAD-dependent DNA ligase family.

The enzyme catalyses NAD(+) + (deoxyribonucleotide)n-3'-hydroxyl + 5'-phospho-(deoxyribonucleotide)m = (deoxyribonucleotide)n+m + AMP + beta-nicotinamide D-nucleotide.. Its function is as follows. Catalyzes the formation of phosphodiester linkages between 5'-phosphoryl and 3'-hydroxyl groups in double-stranded DNA using NAD as a coenzyme and as the energy source for the reaction. The chain is Putative DNA ligase 052L from Invertebrate iridescent virus 3 (IIV-3).